Reading from the N-terminus, the 492-residue chain is BTB/POZ domain and ankyrin repeat-containing protein NOOT2 (492 aa).

One can recognise a BTB domain in the interval 25–107 (SDVTFQVEGR…LYSGQVSIVP (83 aa)). A C2HC NPR-type zinc finger spans residues 113–127 (RPNCGERGCWHTHCT). C116, C121, H123, and C126 together coordinate Zn(2+). ANK repeat units lie at residues 248–277 (QKIR…LNLD), 278–307 (EALA…DVNY), 312–341 (AGKT…DPTV), and 345–379 (DGVT…KLRL). Disordered stretches follow at residues 395 to 439 (ENNA…NSIG) and 455 to 492 (TQMG…SHDF). 2 stretches are compositionally biased toward low complexity: residues 397–413 (NASN…SSAA) and 425–439 (SSSS…NSIG). A compositionally biased stretch (basic and acidic residues) spans 461-473 (DDNRHNNSHREAM).

The protein belongs to the plant 'ANKYRIN-BTB/POZ' family. 'NOOT-BOP-COCH-like' (NBCL) subfamily. Homodimer.

It localises to the nucleus. The protein resides in the cytoplasm. The protein localises to the cell membrane. It functions in the pathway protein modification; protein ubiquitination. Its function is as follows. May act as a substrate-specific adapter of an E3 ubiquitin-protein ligase complex (CUL3-RBX1-BTB) which mediates the ubiquitination and subsequent proteasomal degradation of target proteins. Transcriptional co-regulator involved in the promotion of leaf and floral meristem fate and determinacy. Required for the abscission of senescent organs, probably by regulating the cell wall disorganization in abscission zones (AZs, e.g. pulvini at the base of leaves). Involved in the coordination of the symbiotic nodule developmental program; promotes the formation of root nodules by interacting directly with APP1 to modulate the expression of the nuclear transcription factor Y subunit (NF-YA1), a key nodulin. Involved in the regulation of indeterminate nodule identity in association with NOOT1. This is BTB/POZ domain and ankyrin repeat-containing protein NOOT2 from Medicago truncatula (Barrel medic).